The sequence spans 132 residues: Acyl-CoA thioester hydrolase YciA (132 aa).

Residues 8 to 123 (PQGDLVLRTL…LFKYVAVDPE (116 aa)) form the HotDog ACOT-type domain.

The protein belongs to the acyl coenzyme A hydrolase family.

In terms of biological role, catalyzes the hydrolysis of the thioester bond in palmitoyl-CoA and malonyl-CoA. The protein is Acyl-CoA thioester hydrolase YciA (yciA) of Escherichia coli O6:H1 (strain CFT073 / ATCC 700928 / UPEC).